The following is a 129-amino-acid chain: NADH-quinone oxidoreductase subunit A (129 aa).

The next 3 membrane-spanning stretches (helical) occupy residues 14–34 (LAIHVALSAGIVAAIIVVAAW), 67–87 (FLIAALFVIFDMEAAILFAWA), and 95–115 (WLGLIEAAVFIGVLLLALVYL).

The protein belongs to the complex I subunit 3 family. In terms of assembly, NDH-1 is composed of 14 different subunits. Subunits NuoA, H, J, K, L, M, N constitute the membrane sector of the complex.

Its subcellular location is the cell inner membrane. It catalyses the reaction a quinone + NADH + 5 H(+)(in) = a quinol + NAD(+) + 4 H(+)(out). In terms of biological role, NDH-1 shuttles electrons from NADH, via FMN and iron-sulfur (Fe-S) centers, to quinones in the respiratory chain. The immediate electron acceptor for the enzyme in this species is believed to be ubiquinone. Couples the redox reaction to proton translocation (for every two electrons transferred, four hydrogen ions are translocated across the cytoplasmic membrane), and thus conserves the redox energy in a proton gradient. This chain is NADH-quinone oxidoreductase subunit A, found in Rhodopseudomonas palustris (strain BisB5).